Consider the following 78-residue polypeptide: Dihydrofolate reductase type 2 (78 aa).

NADP(+) contacts are provided by residues 32–36 and 66–69; these read KKSGA and VQIY. I68 lines the substrate pocket.

As to quaternary structure, homotetramer.

The catalysed reaction is (6S)-5,6,7,8-tetrahydrofolate + NADP(+) = 7,8-dihydrofolate + NADPH + H(+). It functions in the pathway cofactor biosynthesis; tetrahydrofolate biosynthesis; 5,6,7,8-tetrahydrofolate from 7,8-dihydrofolate: step 1/1. Its function is as follows. Key enzyme in folate metabolism. Catalyzes an essential reaction for de novo glycine and purine synthesis, and for DNA precursor synthesis. The protein is Dihydrofolate reductase type 2 of Escherichia coli.